Consider the following 625-residue polypeptide: 1-deoxy-D-xylulose-5-phosphate synthase (625 aa).

Thiamine diphosphate is bound by residues His-84 and Gly-125–Ser-127. Asp-156 provides a ligand contact to Mg(2+). Thiamine diphosphate is bound by residues Gly-157–Ala-158, Asn-185, Phe-292, and Glu-373. A Mg(2+)-binding site is contributed by Asn-185.

This sequence belongs to the transketolase family. DXPS subfamily. In terms of assembly, homodimer. Requires Mg(2+) as cofactor. It depends on thiamine diphosphate as a cofactor.

The enzyme catalyses D-glyceraldehyde 3-phosphate + pyruvate + H(+) = 1-deoxy-D-xylulose 5-phosphate + CO2. It participates in metabolic intermediate biosynthesis; 1-deoxy-D-xylulose 5-phosphate biosynthesis; 1-deoxy-D-xylulose 5-phosphate from D-glyceraldehyde 3-phosphate and pyruvate: step 1/1. In terms of biological role, catalyzes the acyloin condensation reaction between C atoms 2 and 3 of pyruvate and glyceraldehyde 3-phosphate to yield 1-deoxy-D-xylulose-5-phosphate (DXP). This Marinomonas sp. (strain MWYL1) protein is 1-deoxy-D-xylulose-5-phosphate synthase.